We begin with the raw amino-acid sequence, 468 residues long: MNAATKLPGDVGPIHFVGIGGIGMSGIAEVLLNHGYRVQGSDLKPTRITRRLEELGARVFVGQRPENIEDAEVIVISSAIKPGNAELDAARARGLPIVRRAEMLGELMRLKSNIAVAGTHGKTTTTTMVATLLDAGEFDPTVVNGGIIHAYGSNARKGEGEWMVVEADESDGTFNRLPATIAIVTNIDPEHMEHWGDFDTLRQGFLDFVSNIPFYGVAVCCTDHPEVQALVGKITDRRVITYGFNAQADVRAVNLRYAGGVAYFDVALQAEGTVIEGCSLPMPGDHNVSNALSAIAVARHLGMKAEVIKTALAAFGGVNRRFTRVGEIDGVTIIDDYGHHPVEIAAVLKAARQATEGRVIAVHQPHRYSRLSSLFDDFCACFNDADVVGIAEVYAAGEDPIPGAGRDDLVAGLIRHGHRHARAVVGEDDLERLVREQTRPGDMVVCLGAGTISAWANGLPARLQKGAA.

118-124 lines the ATP pocket; the sequence is GTHGKTT.

Belongs to the MurCDEF family.

The protein resides in the cytoplasm. It catalyses the reaction UDP-N-acetyl-alpha-D-muramate + L-alanine + ATP = UDP-N-acetyl-alpha-D-muramoyl-L-alanine + ADP + phosphate + H(+). It functions in the pathway cell wall biogenesis; peptidoglycan biosynthesis. Its function is as follows. Cell wall formation. The sequence is that of UDP-N-acetylmuramate--L-alanine ligase from Roseobacter denitrificans (strain ATCC 33942 / OCh 114) (Erythrobacter sp. (strain OCh 114)).